A 497-amino-acid polypeptide reads, in one-letter code: NAD(P)H-quinone oxidoreductase chain 4, chloroplastic (497 aa).

14 helical membrane passes run 5-25 (VPWL…IPIL), 36-56 (YTLG…YCHF), 88-108 (LGLV…AWPI), 112-132 (TRLF…LFVS), 135-155 (ILLF…LLCL), 168-188 (FVLY…TMSF), 212-232 (VLIY…FPFH), 243-263 (HYST…YGLI), 275-295 (FLLG…ASLI), 306-326 (IAYS…SFTE), 331-351 (GAIL…FLAG), 387-407 (LALP…GVVT), 418-438 (GITV…LSML), and 463-483 (LFIL…PNLI).

The protein belongs to the complex I subunit 4 family.

The protein resides in the plastid. It localises to the chloroplast thylakoid membrane. It carries out the reaction a plastoquinone + NADH + (n+1) H(+)(in) = a plastoquinol + NAD(+) + n H(+)(out). The enzyme catalyses a plastoquinone + NADPH + (n+1) H(+)(in) = a plastoquinol + NADP(+) + n H(+)(out). This chain is NAD(P)H-quinone oxidoreductase chain 4, chloroplastic, found in Adiantum capillus-veneris (Maidenhair fern).